The chain runs to 211 residues: Protein-L-isoaspartate O-methyltransferase (211 aa).

The active site involves Ser-60.

Belongs to the methyltransferase superfamily. L-isoaspartyl/D-aspartyl protein methyltransferase family.

It localises to the cytoplasm. It catalyses the reaction [protein]-L-isoaspartate + S-adenosyl-L-methionine = [protein]-L-isoaspartate alpha-methyl ester + S-adenosyl-L-homocysteine. In terms of biological role, catalyzes the methyl esterification of L-isoaspartyl residues in peptides and proteins that result from spontaneous decomposition of normal L-aspartyl and L-asparaginyl residues. It plays a role in the repair and/or degradation of damaged proteins. This is Protein-L-isoaspartate O-methyltransferase from Pseudomonas fluorescens (strain ATCC BAA-477 / NRRL B-23932 / Pf-5).